The primary structure comprises 201 residues: Recombination protein RecR (201 aa).

The C4-type zinc-finger motif lies at 57–72 (CKYCANFTNKDECDIC). The region spanning 80-176 (TKLMIVTTNE…QIYRIGFGIP (97 aa)) is the Toprim domain.

The protein belongs to the RecR family.

May play a role in DNA repair. It seems to be involved in an RecBC-independent recombinational process of DNA repair. It may act with RecF and RecO. This Ureaplasma parvum serovar 3 (strain ATCC 27815 / 27 / NCTC 11736) protein is Recombination protein RecR.